A 263-amino-acid chain; its full sequence is Elongin-A (263 aa).

Disordered stretches follow at residues 112-147 (KLEQ…YCPK) and 170-263 (SATS…PKRI). Composition is skewed to polar residues over residues 186–206 (RSSS…NTYP) and 214–229 (SFTS…VKTQ). Residues 230–245 (PSSSSSPSISRPTSFP) are compositionally biased toward low complexity. Residues 253 to 263 (SRFSSQVPKRI) are compositionally biased toward polar residues.

It belongs to the ELA1 family. As to quaternary structure, heterodimer with elc1. Component of a CRL3 E3 ubiquitin ligase complex consisting of a cullin, the linker protein elc1, the substrate receptor pof4/ela1, and the RING protein rbx1. Interacts with skp1.

As part of the CRL3 E3 ubiquitin ligase complex; polyubiquitylates monoubiquitylated RNA polymerase II subunit rpb1 to trigger its proteolysis; plays a role in global genomic repair. The chain is Elongin-A (pof4) from Schizosaccharomyces pombe (strain 972 / ATCC 24843) (Fission yeast).